The chain runs to 332 residues: Fructose-1,6-bisphosphatase class 1 1 (332 aa).

The Mg(2+) site is built by E92, D115, L117, and D118. Substrate contacts are provided by residues 118-121, N211, Y244, 262-264, and K274; these read DGSS and YLY. E280 contributes to the Mg(2+) binding site.

This sequence belongs to the FBPase class 1 family. In terms of assembly, homotetramer. The cofactor is Mg(2+).

It is found in the cytoplasm. The catalysed reaction is beta-D-fructose 1,6-bisphosphate + H2O = beta-D-fructose 6-phosphate + phosphate. It functions in the pathway carbohydrate biosynthesis; gluconeogenesis. The polypeptide is Fructose-1,6-bisphosphatase class 1 1 (Christiangramia forsetii (strain DSM 17595 / CGMCC 1.15422 / KT0803) (Gramella forsetii)).